The sequence spans 598 residues: Integrator complex subunit 11 (598 aa).

Zn(2+) is bound by residues His68, His70, Asp72, His73, His157, and Asp178. An HXHXDH motif motif is present at residues 68 to 73 (HFHLDH). Glu203 is an active-site residue. His414 provides a ligand contact to Zn(2+). Positions 470 to 480 (PLPDAKRPRTM) match the Nuclear localization signal motif.

This sequence belongs to the metallo-beta-lactamase superfamily. RNA-metabolizing metallo-beta-lactamase-like family. INTS11 subfamily. In terms of assembly, component of the Integrator complex, composed of core subunits INTS1, INTS2, INTS3, INTS4, INTS5, INTS6, INTS7, INTS8, INTS9/RC74, INTS10, INTS11/CPSF3L, INTS12, INTS13, INTS14 and INTS15. The core complex associates with protein phosphatase 2A subunits PPP2CA and PPP2R1A, to form the Integrator-PP2A (INTAC) complex. INTS11 is part of the RNA endonuclease subcomplex, composed of INTS4, INTS9, INTS11 and inositol hexakisphosphate (InsP6). Zn(2+) is required as a cofactor.

The protein resides in the nucleus. The protein localises to the cytoplasm. RNA endonuclease component of the integrator complex, a multiprotein complex that terminates RNA polymerase II (Pol II) transcription in the promoter-proximal region of genes. The integrator complex provides a quality checkpoint during transcription elongation by driving premature transcription termination of transcripts that are unfavorably configured for transcriptional elongation: the complex terminates transcription by (1) catalyzing dephosphorylation of the C-terminal domain (CTD) of Pol II subunit POLR2A/RPB1 and SUPT5H/SPT5, (2) degrading the exiting nascent RNA transcript via endonuclease activity and (3) promoting the release of Pol II from bound DNA. The integrator complex is also involved in terminating the synthesis of non-coding Pol II transcripts, such as enhancer RNAs (eRNAs), small nuclear RNAs (snRNAs), telomerase RNAs and long non-coding RNAs (lncRNAs). Within the integrator complex, INTS11 constitutes the RNA endonuclease subunit that degrades exiting nascent RNA transcripts. The protein is Integrator complex subunit 11 (cpsf3l) of Danio rerio (Zebrafish).